We begin with the raw amino-acid sequence, 849 residues long: Protein lap1 (849 aa).

17 LRR repeats span residues 18–39, 41–62, 64–85, 87–108, 110–131, 133–155, 156–177, 179–200, 202–224, 225–246, 248–269, 271–292, 294–315, 317–338, 340–362, 363–384, and 386–407; these read VIDKLDYSNTPLTDFPEVWQHE, TLEELYLSTTRLQALPPQLFYC, GLRVLHVNSNNLESIPQAIGSL, QLQHLDLNRNLIVNVPEEIKSC, HLTHLDLSCNSLQRLPDAITSL, SLQELLLNETYLEFLPANFGRLV, NLRILELRLNNLMTLPKSMVRL, NLQRLDIGGNEFTELPEVVGEL, SLRELWIDFNQIRRVSANIGKLR, DLQHFEANGNLLDTLPSELSNW, NVEVLSICSNSLEAFPFSVGML, SLVTFKCESNGLTELPDSISYL, QLEELVLSHNKLIRLPSTIGML, SLRFLFADDNQLRQLPDELCSC, QLSVLSVANNQLSALPQNIGNLS, KMKVLNVVNNYINALPVSMLNL, and NLTSMWLSDNQSQPLVPLQYLD. Positions 716 to 752 are disordered; that stretch reads NNISNNLEPNPEEEDQELDDTMSQHSLNSTATNNTSK. Positions 725-735 are enriched in acidic residues; that stretch reads NPEEEDQELDD. Over residues 736 to 752 the composition is skewed to polar residues; that stretch reads TMSQHSLNSTATNNTSK. The region spanning 770–849 is the PDZ domain; it reads VKQVTLKWEN…TVMNIMLSRK (80 aa).

This sequence belongs to the LAP (LRR and PDZ) protein family.

In terms of biological role, may have a role in assembling adherens junctions. This chain is Protein lap1, found in Drosophila melanogaster (Fruit fly).